A 282-amino-acid chain; its full sequence is HTH-type transcriptional activator RhaR (282 aa).

An HTH araC/xylS-type domain is found at 179 to 277 (DKLITRLAAS…GMTPSQWRHL (99 aa)). 2 DNA-binding regions (H-T-H motif) span residues 196–217 (DKFC…RQQT) and 244–267 (ISDI…TRET).

In terms of assembly, binds DNA as a dimer.

Its subcellular location is the cytoplasm. Its function is as follows. Activates expression of the rhaSR operon in response to L-rhamnose. This is HTH-type transcriptional activator RhaR from Shigella dysenteriae serotype 1 (strain Sd197).